Consider the following 154-residue polypeptide: SsrA-binding protein (154 aa).

The protein belongs to the SmpB family.

It localises to the cytoplasm. In terms of biological role, required for rescue of stalled ribosomes mediated by trans-translation. Binds to transfer-messenger RNA (tmRNA), required for stable association of tmRNA with ribosomes. tmRNA and SmpB together mimic tRNA shape, replacing the anticodon stem-loop with SmpB. tmRNA is encoded by the ssrA gene; the 2 termini fold to resemble tRNA(Ala) and it encodes a 'tag peptide', a short internal open reading frame. During trans-translation Ala-aminoacylated tmRNA acts like a tRNA, entering the A-site of stalled ribosomes, displacing the stalled mRNA. The ribosome then switches to translate the ORF on the tmRNA; the nascent peptide is terminated with the 'tag peptide' encoded by the tmRNA and targeted for degradation. The ribosome is freed to recommence translation, which seems to be the essential function of trans-translation. In Treponema pallidum (strain Nichols), this protein is SsrA-binding protein.